Reading from the N-terminus, the 90-residue chain is Probable two-component-system connector protein YmgA (90 aa).

Over residues 63–80 (SDSGGPNRRTATADNKSM) the composition is skewed to polar residues. The tract at residues 63–90 (SDSGGPNRRTATADNKSMFNGKKINRIH) is disordered.

Its function is as follows. Probably a connector protein for RcsB/C regulation of biofilm formation, providing additional signal input into the two-component signaling pathway. May serve to stimulate biofilm maturation, probably via the Rcs phosphorelay. Mild overexpression at 16 degrees Celsius increases the production of colanic acid, an exopolysaccharide and matrix component, and reduces adhesive curli fimbriae expression. Both of these effects require RcsB. The polypeptide is Probable two-component-system connector protein YmgA (ymgA) (Escherichia coli (strain K12)).